The chain runs to 873 residues: Disks large homolog 1 (873 aa).

One can recognise an L27 domain in the interval 4 to 64 (RQKDAQRALQ…YYEVSLQDTE (61 aa)). Residues 62 to 135 (DTEDKPIEDS…SPHIPGDARP (74 aa)) form a disordered region. Residues 63–77 (TEDKPIEDSSLKSRE) show a composition bias toward basic and acidic residues. Positions 85 to 96 (WNLSVPPSTTGP) are enriched in polar residues. PDZ domains lie at 230 to 317 (EITL…RRRK) and 325 to 412 (DVKL…AKPT). Residues 441–456 (SYLSQPLTPATPSRYS) are compositionally biased toward polar residues. A disordered region spans residues 441-464 (SYLSQPLTPATPSRYSPVSKGMLG). Residues 474–555 (KIVLHRGTTG…TVTIIAQYRP (82 aa)) enclose the PDZ 3 domain. The tract at residues 636–662 (NKDSGEQDTSDVDQHVTSNASDSESSF) is disordered. Residues 650–662 (HVTSNASDSESSF) are compositionally biased toward polar residues. The 176-residue stretch at 683–858 (SRPVIILGPM…IYNQVKQIIE (176 aa)) folds into the Guanylate kinase-like domain.

The protein belongs to the MAGUK family.

The protein localises to the cell membrane. The protein resides in the endoplasmic reticulum membrane. Its subcellular location is the cell junction. It is found in the apical cell membrane. Functionally, essential multidomain scaffolding protein required for normal development. Recruits channels, receptors and signaling molecules to discrete plasma membrane domains in polarized cells. Promotes epithelial cell layer barrier function via maintaining cell-cell adhesion. May play a role in adherens junction assembly, signal transduction and cell proliferation. May play a role in synapse assembly and function. In Danio rerio (Zebrafish), this protein is Disks large homolog 1 (dlg1).